The sequence spans 626 residues: DNA primase (626 aa).

Residues cysteine 39–cysteine 63 form a CHC2-type zinc finger. The region spanning glutamate 264 to glycine 346 is the Toprim domain. Positions 270, 314, and 316 each coordinate Mg(2+).

This sequence belongs to the DnaG primase family. As to quaternary structure, monomer. Interacts with DnaB. The cofactor is Zn(2+). Mg(2+) is required as a cofactor.

The catalysed reaction is ssDNA + n NTP = ssDNA/pppN(pN)n-1 hybrid + (n-1) diphosphate.. RNA polymerase that catalyzes the synthesis of short RNA molecules used as primers for DNA polymerase during DNA replication. The polypeptide is DNA primase (Listeria monocytogenes serovar 1/2a (strain ATCC BAA-679 / EGD-e)).